We begin with the raw amino-acid sequence, 151 residues long: Large ribosomal subunit protein eL8 (151 aa).

This sequence belongs to the eukaryotic ribosomal protein eL8 family. Part of the 50S ribosomal subunit. Probably part of the RNase P complex.

It localises to the cytoplasm. Functionally, multifunctional RNA-binding protein that recognizes the K-turn motif in ribosomal RNA, the RNA component of RNase P, box H/ACA, box C/D and box C'/D' sRNAs. The sequence is that of Large ribosomal subunit protein eL8 from Pyrobaculum aerophilum (strain ATCC 51768 / DSM 7523 / JCM 9630 / CIP 104966 / NBRC 100827 / IM2).